The following is a 176-amino-acid chain: 3-hydroxydecanoyl-[acyl-carrier-protein] dehydratase (176 aa).

The active site involves histidine 75.

Belongs to the thioester dehydratase family. FabA subfamily. Homodimer.

It localises to the cytoplasm. The enzyme catalyses a (3R)-hydroxyacyl-[ACP] = a (2E)-enoyl-[ACP] + H2O. It carries out the reaction (3R)-hydroxydecanoyl-[ACP] = (2E)-decenoyl-[ACP] + H2O. It catalyses the reaction (2E)-decenoyl-[ACP] = (3Z)-decenoyl-[ACP]. It functions in the pathway lipid metabolism; fatty acid biosynthesis. In terms of biological role, necessary for the introduction of cis unsaturation into fatty acids. Catalyzes the dehydration of (3R)-3-hydroxydecanoyl-ACP to E-(2)-decenoyl-ACP and then its isomerization to Z-(3)-decenoyl-ACP. Can catalyze the dehydratase reaction for beta-hydroxyacyl-ACPs with saturated chain lengths up to 16:0, being most active on intermediate chain length. The chain is 3-hydroxydecanoyl-[acyl-carrier-protein] dehydratase from Actinobacillus pleuropneumoniae serotype 5b (strain L20).